A 317-amino-acid polypeptide reads, in one-letter code: L-lactate dehydrogenase (317 aa).

NAD(+) contacts are provided by residues V16, D37, R42, Y67, and 81–82 (GA). Residues Q84 and R90 each contribute to the substrate site. NAD(+) contacts are provided by residues S103, 120–122 (AAN), and S145. A substrate-binding site is contributed by 122–125 (NPVD). Residue 150–153 (DSAR) participates in substrate binding. The Proton acceptor role is filled by H177. A Phosphotyrosine modification is found at Y221. T230 serves as a coordination point for substrate.

Belongs to the LDH/MDH superfamily. LDH family. In terms of assembly, homotetramer.

It is found in the cytoplasm. It catalyses the reaction (S)-lactate + NAD(+) = pyruvate + NADH + H(+). It functions in the pathway fermentation; pyruvate fermentation to lactate; (S)-lactate from pyruvate: step 1/1. Its function is as follows. Catalyzes the conversion of lactate to pyruvate. The protein is L-lactate dehydrogenase of Limosilactobacillus fermentum (strain NBRC 3956 / LMG 18251) (Lactobacillus fermentum).